The following is a 616-amino-acid chain: Adenylosuccinate synthetase 2 (616 aa).

Residues 1-26 (MDKQAERDQSAGPVKTPQETQPPAHN) are disordered. The span at 17–26 (PQETQPPAHN) shows a compositional bias: polar residues. GTP is bound by residues 87–93 (GDEGKGK) and 117–119 (GHT). D88 (proton acceptor) is an active-site residue. Mg(2+) contacts are provided by D88 and G117. IMP contacts are provided by residues 88–91 (DEGK), 115–118 (NAGH), T202, K216, Q328, T343, and K472. H118 (proton donor) is an active-site residue. Residue 468–474 (AVTKKPR) participates in substrate binding. Residues R474 and 603–605 (GNG) each bind GTP.

It belongs to the adenylosuccinate synthetase family. Homodimer. It depends on Mg(2+) as a cofactor.

It is found in the cytoplasm. The catalysed reaction is IMP + L-aspartate + GTP = N(6)-(1,2-dicarboxyethyl)-AMP + GDP + phosphate + 2 H(+). It functions in the pathway purine metabolism; AMP biosynthesis via de novo pathway; AMP from IMP: step 1/2. Plays an important role in the salvage pathway for purine nucleotide biosynthesis. Catalyzes the first committed step in the biosynthesis of AMP from IMP. The sequence is that of Adenylosuccinate synthetase 2 from Trypanosoma cruzi (strain CL Brener).